We begin with the raw amino-acid sequence, 302 residues long: Aspartate carbamoyltransferase catalytic subunit (302 aa).

Positions 53 and 54 each coordinate carbamoyl phosphate. Lys-82 contacts L-aspartate. Carbamoyl phosphate-binding residues include Arg-103, His-131, and Gln-134. L-aspartate contacts are provided by Arg-164 and Arg-223. Carbamoyl phosphate is bound by residues Leu-260 and Pro-261.

The protein belongs to the aspartate/ornithine carbamoyltransferase superfamily. ATCase family. As to quaternary structure, heterooligomer of catalytic and regulatory chains.

It catalyses the reaction carbamoyl phosphate + L-aspartate = N-carbamoyl-L-aspartate + phosphate + H(+). It participates in pyrimidine metabolism; UMP biosynthesis via de novo pathway; (S)-dihydroorotate from bicarbonate: step 2/3. Functionally, catalyzes the condensation of carbamoyl phosphate and aspartate to form carbamoyl aspartate and inorganic phosphate, the committed step in the de novo pyrimidine nucleotide biosynthesis pathway. The protein is Aspartate carbamoyltransferase catalytic subunit of Methanococcus maripaludis (strain C6 / ATCC BAA-1332).